The chain runs to 338 residues: Patr class I histocompatibility antigen, alpha chain G (338 aa).

An N-terminal signal peptide occupies residues 1–24 (MVVMAPRTLFLLLSGALTLTETWA). The tract at residues 25-114 (GSHSMRYFSA…LRGYYNQSEA (90 aa)) is alpha-1. At 25-308 (GSHSMRYFSA…KQSSLPTIPI (284 aa)) the chain is on the extracellular side. N-linked (GlcNAc...) asparagine glycosylation is present at asparagine 110. Residues 115-206 (SSHTLQWMIG…ENGKEMLQRA (92 aa)) form an alpha-2 region. 2 cysteine pairs are disulfide-bonded: cysteine 125–cysteine 188 and cysteine 227–cysteine 283. The interval 207–298 (DPPKTHVTHH…GLPEPLMLRW (92 aa)) is alpha-3. Residues 209-299 (PKTHVTHHPV…LPEPLMLRWK (91 aa)) enclose the Ig-like C1-type domain. The segment at 299-308 (KQSSLPTIPI) is connecting peptide. The helical transmembrane segment at 309–332 (MGIVAGLVVLAAVVTGAAVAAVLW) threads the bilayer. Topologically, residues 333-338 (RKKSSD) are cytoplasmic.

This sequence belongs to the MHC class I family. Heterodimer of an alpha chain and a beta chain (beta-2-microglobulin). Homodimer; disulfide-linked. Binds to LILRB1 and LILRB2.

Its subcellular location is the cell membrane. Its function is as follows. Involved in the presentation of foreign antigens to the immune system. This is Patr class I histocompatibility antigen, alpha chain G (Patr-G) from Pan troglodytes (Chimpanzee).